We begin with the raw amino-acid sequence, 1320 residues long: Sal-like protein 3 (1320 aa).

Residues 1–11 are compositionally biased toward basic residues; sequence MSRRKQAKPQH. The disordered stretch occupies residues 1-49; sequence MSRRKQAKPQHLKSDEELPPQDGASEHGVPGDGAEDADSGSESRSGSEE. A compositionally biased stretch (low complexity) spans 40 to 49; it reads GSESRSGSEE. A C2H2-type 1; atypical zinc finger spans residues 51–73; it reads SVCEKCCAEFFKWADFLQHKKTC. Disordered regions lie at residues 84–166 and 271–367; these read DDEP…AFSM and LSAG…NLPN. Pro residues predominate over residues 88–100; sequence APPSEDFPEPSPA. Serine 109 is modified (phosphoserine). The span at 121–131 shows a compositional bias: basic and acidic residues; sequence SEVKAATKEAE. The segment covering 143–160 has biased composition (pro residues); sequence PPGPSVPPPPPALPPQPE. Over residues 271–289 the composition is skewed to low complexity; sequence LSAGPATASAGSGSTLPAA. The segment covering 295-311 has biased composition (polar residues); sequence HLSQPASGTSTPCSTSA. 2 stretches are compositionally biased toward low complexity: residues 323–342 and 355–367; these read STGPAPGAVAAASSTVGNAV and PGPLLSSASNLPN. 2 C2H2-type zinc fingers span residues 427–449 and 455–477; these read HKCRFCAKVFGSDSALQIHLRSH and FKCNICGNRFSTKGNLKVHFQRH. Residues 534 to 623 form a disordered region; that stretch reads GLQLPPTVPG…RTGDAPVVGG (90 aa). The span at 543–554 shows a compositional bias: polar residues; that stretch reads GTHNYTDSPSIT. Positions 555–568 are enriched in low complexity; that stretch reads PVSRSPQRPSPASS. A compositionally biased stretch (polar residues) spans 569-583; that stretch reads ECTSLSPGLNNTESG. C2H2-type zinc fingers lie at residues 692-714, 720-742, and 752-774; these read NQCVICHRVLSCQSALKMHYRTH, FKCKICGRAFTTKGNLKTHFGVH, and HSCPICQKKFTNAVVLQQHIRMH. Disordered regions lie at residues 807–846 and 878–972; these read SSFDDDIDENSMEEDSELKDTASDSSKPLLSYSGSCPPSP and VENG…GHPG. Acidic residues predominate over residues 809-823; the sequence is FDDDIDENSMEEDSE. 2 stretches are compositionally biased toward low complexity: residues 834-846 and 902-923; these read PLLSYSGSCPPSP and RSAGSPALSESSSSQALSPAHS. A Phosphoserine modification is found at serine 932. 4 C2H2-type zinc fingers span residues 997–1019, 1025–1047, 1133–1155, and 1161–1183; these read TVCGVCGKPFACKSALEIHYRSH, FVCTVCRRGCSTMGNLKQHLLTH, HNCQSCGKTFSSASALQIHERTH, and FGCTICGRAFTTKGNLKVHMGTH. Serine 1197 is subject to Phosphoserine.

It belongs to the sal C2H2-type zinc-finger protein family. In adult brain, testis and kidney. In lower levels also in adult ovaries and embryonic stem cells. In embryo in developing neuroectoderm of brain, inner ear and spinal cord. Also weakly and transiently expressed in embryonic branchial arches, notochord, limb buds and heart.

The protein resides in the nucleus. Functionally, probable transcription factor. The chain is Sal-like protein 3 (Sall3) from Mus musculus (Mouse).